The following is a 179-amino-acid chain: Shikimate kinase (179 aa).

Position 11-16 (G11–T16) interacts with ATP. T15 contributes to the Mg(2+) binding site. Residues D33, R57, and G79 each contribute to the substrate site. Position 118 (R118) interacts with ATP. Substrate is bound at residue R140.

The protein belongs to the shikimate kinase family. As to quaternary structure, monomer. It depends on Mg(2+) as a cofactor.

It is found in the cytoplasm. The catalysed reaction is shikimate + ATP = 3-phosphoshikimate + ADP + H(+). It functions in the pathway metabolic intermediate biosynthesis; chorismate biosynthesis; chorismate from D-erythrose 4-phosphate and phosphoenolpyruvate: step 5/7. Functionally, catalyzes the specific phosphorylation of the 3-hydroxyl group of shikimic acid using ATP as a cosubstrate. This chain is Shikimate kinase, found in Bacteroides fragilis (strain ATCC 25285 / DSM 2151 / CCUG 4856 / JCM 11019 / LMG 10263 / NCTC 9343 / Onslow / VPI 2553 / EN-2).